A 240-amino-acid polypeptide reads, in one-letter code: Pyridoxine 5'-phosphate synthase (240 aa).

3-amino-2-oxopropyl phosphate is bound at residue N6. Residue 8–9 (DH) participates in 1-deoxy-D-xylulose 5-phosphate binding. R17 contributes to the 3-amino-2-oxopropyl phosphate binding site. H42 functions as the Proton acceptor in the catalytic mechanism. 1-deoxy-D-xylulose 5-phosphate is bound by residues R44 and H49. The Proton acceptor role is filled by E69. Residue T99 participates in 1-deoxy-D-xylulose 5-phosphate binding. H190 serves as the catalytic Proton donor. Residues G191 and 212–213 (GH) contribute to the 3-amino-2-oxopropyl phosphate site.

This sequence belongs to the PNP synthase family. Homooctamer; tetramer of dimers.

Its subcellular location is the cytoplasm. The catalysed reaction is 3-amino-2-oxopropyl phosphate + 1-deoxy-D-xylulose 5-phosphate = pyridoxine 5'-phosphate + phosphate + 2 H2O + H(+). The protein operates within cofactor biosynthesis; pyridoxine 5'-phosphate biosynthesis; pyridoxine 5'-phosphate from D-erythrose 4-phosphate: step 5/5. Catalyzes the complicated ring closure reaction between the two acyclic compounds 1-deoxy-D-xylulose-5-phosphate (DXP) and 3-amino-2-oxopropyl phosphate (1-amino-acetone-3-phosphate or AAP) to form pyridoxine 5'-phosphate (PNP) and inorganic phosphate. In Pseudomonas entomophila (strain L48), this protein is Pyridoxine 5'-phosphate synthase.